A 215-amino-acid chain; its full sequence is Large ribosomal subunit protein uL1 (215 aa).

The protein belongs to the universal ribosomal protein uL1 family. Part of the 50S ribosomal subunit.

In terms of biological role, binds directly to 23S rRNA. Probably involved in E site tRNA release. Functionally, protein L1 is also a translational repressor protein, it controls the translation of its operon by binding to its mRNA. The polypeptide is Large ribosomal subunit protein uL1 (Methanospirillum hungatei JF-1 (strain ATCC 27890 / DSM 864 / NBRC 100397 / JF-1)).